We begin with the raw amino-acid sequence, 397 residues long: CCA-adding enzyme (397 aa).

ATP-binding residues include Gly-26 and Arg-29. CTP is bound by residues Gly-26 and Arg-29. Mg(2+) is bound by residues Asp-39 and Asp-41. Arg-110, Asp-153, Arg-156, Arg-159, and Arg-162 together coordinate ATP. CTP-binding residues include Arg-110, Asp-153, Arg-156, Arg-159, and Arg-162.

It belongs to the tRNA nucleotidyltransferase/poly(A) polymerase family. Bacterial CCA-adding enzyme type 3 subfamily. Homodimer. Mg(2+) serves as cofactor.

It carries out the reaction a tRNA precursor + 2 CTP + ATP = a tRNA with a 3' CCA end + 3 diphosphate. The enzyme catalyses a tRNA with a 3' CCA end + 2 CTP + ATP = a tRNA with a 3' CCACCA end + 3 diphosphate. Functionally, catalyzes the addition and repair of the essential 3'-terminal CCA sequence in tRNAs without using a nucleic acid template. Adds these three nucleotides in the order of C, C, and A to the tRNA nucleotide-73, using CTP and ATP as substrates and producing inorganic pyrophosphate. tRNA 3'-terminal CCA addition is required both for tRNA processing and repair. Also involved in tRNA surveillance by mediating tandem CCA addition to generate a CCACCA at the 3' terminus of unstable tRNAs. While stable tRNAs receive only 3'-terminal CCA, unstable tRNAs are marked with CCACCA and rapidly degraded. The chain is CCA-adding enzyme from Bacillus cereus (strain ATCC 10987 / NRS 248).